An 85-amino-acid chain; its full sequence is N.vectensis toxin 6 (85 aa).

Residues 1–20 (MISFKTVIVCLFLWVVIIGA) form the signal peptide. Disulfide bonds link cysteine 46-cysteine 82, cysteine 48-cysteine 71, and cysteine 64-cysteine 83.

Its function is as follows. Probable toxin. The protein is N.vectensis toxin 6 of Nematostella vectensis (Starlet sea anemone).